Consider the following 499-residue polypeptide: Bifunctional purine biosynthesis protein PurH (499 aa).

An MGS-like domain is found at 1-144 (MIKRALISVF…KNFKDVVVLT (144 aa)).

Belongs to the PurH family.

It catalyses the reaction (6R)-10-formyltetrahydrofolate + 5-amino-1-(5-phospho-beta-D-ribosyl)imidazole-4-carboxamide = 5-formamido-1-(5-phospho-D-ribosyl)imidazole-4-carboxamide + (6S)-5,6,7,8-tetrahydrofolate. The catalysed reaction is IMP + H2O = 5-formamido-1-(5-phospho-D-ribosyl)imidazole-4-carboxamide. Its pathway is purine metabolism; IMP biosynthesis via de novo pathway; 5-formamido-1-(5-phospho-D-ribosyl)imidazole-4-carboxamide from 5-amino-1-(5-phospho-D-ribosyl)imidazole-4-carboxamide (10-formyl THF route): step 1/1. The protein operates within purine metabolism; IMP biosynthesis via de novo pathway; IMP from 5-formamido-1-(5-phospho-D-ribosyl)imidazole-4-carboxamide: step 1/1. The protein is Bifunctional purine biosynthesis protein PurH of Clostridium botulinum (strain Langeland / NCTC 10281 / Type F).